The following is a 495-amino-acid chain: Lysine--tRNA ligase (495 aa).

Mg(2+) is bound by residues glutamate 406 and glutamate 413.

It belongs to the class-II aminoacyl-tRNA synthetase family. As to quaternary structure, homodimer. Mg(2+) is required as a cofactor.

The protein localises to the cytoplasm. The catalysed reaction is tRNA(Lys) + L-lysine + ATP = L-lysyl-tRNA(Lys) + AMP + diphosphate. This is Lysine--tRNA ligase from Staphylococcus epidermidis (strain ATCC 35984 / DSM 28319 / BCRC 17069 / CCUG 31568 / BM 3577 / RP62A).